Here is a 628-residue protein sequence, read N- to C-terminus: FAD-linked oxidoreductase hmp9 (628 aa).

The signal sequence occupies residues 1–29 (MFCIIRAQLLLLLHLLVLALLLVGTVCNA). The interval 34–53 (GHPSELEPLALKRGGSPRDD) is disordered. N-linked (GlcNAc...) asparagine glycans are attached at residues N80 and N133. The FAD-binding PCMH-type domain maps to 152-337 (LGQLPVYAID…LKTKIKAYPN (186 aa)). Residue N356 is glycosylated (N-linked (GlcNAc...) asparagine).

Belongs to the oxygen-dependent FAD-linked oxidoreductase family.

It functions in the pathway secondary metabolite biosynthesis. In terms of biological role, FAD-linked oxidoreductase; part of the gene cluster that mediates the biosynthesis of hypothemycin, a resorcylic acid lactone (RAL) that irreversibly inhibits a subset of protein kinases with a conserved cysteine in the ATP binding site such as human ERK2. The first step is performed by both PKSs hmp3 and hmp8 and leads to the production of 7',8'-dehydrozearalenol (DHZ). The highly reducing PKS hpm8 synthesizes the reduced hexaketide (7S,11S,2E,8E)-7,11-dihydroxy-dodeca-2,8-dienoate, which is transferred downstream to the non-reducing PKS hpm3. Hpm3 then extends the reduced hexaketide to a nonaketide, after which regioselective cyclization and macrolactonization affords DHZ. The next step is the conversion of DHZ into aigialomycin C and is performed by the O-methyltransferase hmp5, the FAD-binding monooxygenase hmp7, and the cytochrome P450 monooxygenase hmp1. The wide substrate tolerance of the hmp5 and hmp7 implies that the reactions from DHZ to aigialomycin C can occur in any order. The steps from aigialomycin C to hypothemycin are less well established. The FAD-linked oxidoreductase hmp9 presumably catalyzes oxidation of the C-6' hydroxyl to a ketone. The timing of this oxidation is important, since the resulting enone functional group is a Michael acceptor that can react spontaneously with glutathione, an abundant metabolite in fungal cells. The glutathione S-transferase hmp2 catalyzes cis-trans isomerization of the 7',8' double bond with equilibrium favoring the trans isomer. The hpm6-encoded transporter might preferentially pump hypothemycin out of the cell relative to the trans isomer aigialomycin A. The cis-to-trans isomerization may be coupled with C-4' hydroxylation, since all known hypothemycin analogs containing the enone functional group also have hydroxyl groups at both C-4' and C-5'. The protein is FAD-linked oxidoreductase hmp9 of Hypomyces subiculosus (Nectria subiculosa).